Reading from the N-terminus, the 326-residue chain is Large ribosomal subunit protein uL4 (326 aa).

The interval 1 to 211 (MASCVVKNWQ…EKLKARWGSG (211 aa)) is large ribosomal subunit protein uL4. Disordered stretches follow at residues 44-76 (ARQG…ARAG) and 211-326 (GAAA…EDND). A compositionally biased stretch (basic residues) spans 60–71 (GGRKPWRQKGTG). Residues 212–326 (AAAAAPTQAD…TAAAEEEDND (115 aa)) are unknown. Residues 221-238 (DRLEDQAQAAEREARPVE) show a composition bias toward basic and acidic residues. Low complexity-rich tracts occupy residues 252–279 (EAQA…QVQE) and 294–312 (QGQA…PPAG). Residues 313–326 (EEAETAAAEEEDND) show a composition bias toward acidic residues.

It belongs to the universal ribosomal protein uL4 family. As to quaternary structure, part of the 50S ribosomal subunit.

One of the primary rRNA binding proteins, this protein initially binds near the 5'-end of the 23S rRNA. It is important during the early stages of 50S assembly. It makes multiple contacts with different domains of the 23S rRNA in the assembled 50S subunit and ribosome. In terms of biological role, forms part of the polypeptide exit tunnel. The sequence is that of Large ribosomal subunit protein uL4 from Synechococcus sp. (strain JA-3-3Ab) (Cyanobacteria bacterium Yellowstone A-Prime).